The following is a 335-amino-acid chain: tRNA-splicing endonuclease (335 aa).

Catalysis depends on residues Tyr269, His280, and Lys311.

It belongs to the tRNA-intron endonuclease family. Archaeal long subfamily. As to quaternary structure, homodimer.

The catalysed reaction is pretRNA = a 3'-half-tRNA molecule with a 5'-OH end + a 5'-half-tRNA molecule with a 2',3'-cyclic phosphate end + an intron with a 2',3'-cyclic phosphate and a 5'-hydroxyl terminus.. Functionally, endonuclease that removes tRNA introns. Cleaves pre-tRNA at the 5'- and 3'-splice sites to release the intron. The products are an intron and two tRNA half-molecules bearing 2',3' cyclic phosphate and 5'-OH termini. Recognizes a pseudosymmetric substrate in which 2 bulged loops of 3 bases are separated by a stem of 4 bp. The protein is tRNA-splicing endonuclease of Haloarcula marismortui (strain ATCC 43049 / DSM 3752 / JCM 8966 / VKM B-1809) (Halobacterium marismortui).